Consider the following 162-residue polypeptide: Endoribonuclease YbeY (162 aa).

Residues His126, His130, and His136 each contribute to the Zn(2+) site.

The protein belongs to the endoribonuclease YbeY family. Zn(2+) is required as a cofactor.

The protein localises to the cytoplasm. Its function is as follows. Single strand-specific metallo-endoribonuclease involved in late-stage 70S ribosome quality control and in maturation of the 3' terminus of the 16S rRNA. This chain is Endoribonuclease YbeY, found in Fusobacterium nucleatum subsp. nucleatum (strain ATCC 25586 / DSM 15643 / BCRC 10681 / CIP 101130 / JCM 8532 / KCTC 2640 / LMG 13131 / VPI 4355).